A 250-amino-acid chain; its full sequence is Type III pantothenate kinase (250 aa).

6 to 13 is a binding site for ATP; that stretch reads DVGNTNTV. 103–106 serves as a coordination point for substrate; the sequence is GADR. Aspartate 105 functions as the Proton acceptor in the catalytic mechanism. Aspartate 125 serves as a coordination point for K(+). An ATP-binding site is contributed by threonine 128. A substrate-binding site is contributed by threonine 180.

This sequence belongs to the type III pantothenate kinase family. Homodimer. It depends on NH4(+) as a cofactor. Requires K(+) as cofactor.

The protein localises to the cytoplasm. It carries out the reaction (R)-pantothenate + ATP = (R)-4'-phosphopantothenate + ADP + H(+). Its pathway is cofactor biosynthesis; coenzyme A biosynthesis; CoA from (R)-pantothenate: step 1/5. Its function is as follows. Catalyzes the phosphorylation of pantothenate (Pan), the first step in CoA biosynthesis. This chain is Type III pantothenate kinase, found in Frankia alni (strain DSM 45986 / CECT 9034 / ACN14a).